We begin with the raw amino-acid sequence, 30 residues long: 2-enoate reductase (30 aa).

In terms of assembly, dodecamer; tetramer of trimers. The cofactor is iron-sulfur cluster. FAD serves as cofactor. Requires FMN as cofactor.

It catalyses the reaction butanoate + NAD(+) = (2E)-2-butenoate + NADH + H(+). In terms of biological role, involved in fermentation of amino acids (Stickland reaction) such as leucine, isoleucine, valine and phenylalanine. This chain is 2-enoate reductase, found in Clostridium tyrobutyricum.